The chain runs to 128 residues: UPF0102 protein BCG_2919c (128 aa).

The protein belongs to the UPF0102 family.

This is UPF0102 protein BCG_2919c from Mycobacterium bovis (strain BCG / Pasteur 1173P2).